A 793-amino-acid chain; its full sequence is Translocase of chloroplast 90, chloroplastic (793 aa).

Residues 22–59 (LGSDPFFRDPHQEQDNHSQAPAAPQPVTLSEPPCSTSS) form a disordered region. Basic and acidic residues predominate over residues 27–37 (FFRDPHQEQDN). Residues 130 to 157 (LIRAEESELKNVKLRQDRAKALAREQES) adopt a coiled-coil conformation. Residues 164-394 (DFSLRILVLG…FRDSIGLGQP (231 aa)) enclose the AIG1-type G domain. Residues 173–180 (GKTGVGKS) are G1. GTP contacts are provided by residues 176 to 181 (GVGKSA) and 195 to 200 (DAFRPG). Position 180 (Ser-180) interacts with Mg(2+). Residues 195–198 (DAFR) are homodimerization. Residues 199 to 203 (PGTDR) are G2. The tract at residues 220-223 (DTPG) is G3. The tract at residues 259 to 264 (RLDMID) is homodimerization. Residues 279–297 (IFGAAIWLNTILVMTHSAA) traverse the membrane as a helical segment. Positions 293–296 (THSA) are G4. GTP-binding positions include His-294 and 341–342 (EN). The tract at residues 341-343 (ENH) is G5. 2 coiled-coil regions span residues 410-442 (LRRR…YDQL) and 477-503 (KKQL…DTEQ).

This sequence belongs to the TRAFAC class TrmE-Era-EngA-EngB-Septin-like GTPase superfamily. AIG1/Toc34/Toc159-like paraseptin GTPase family. TOC159 subfamily. Homodimer. Part of the TOC core complex that includes 1 protein for the specific recognition of transit peptides surrounded by a ring composed of four proteins forming translocation channels, and four to five GTP-binding proteins providing energy. This core complex can interact with components of the TIC complex to form a larger import complex. Chloroplastic protein precursor such as prSS (precursor of the RuBisCO small subunit) interacts with these complexes. The TOC complex contains a specific subset of polar lipids such as digalactosyldiacylglyceride (DGDG), phosphatidylcholine (PC) and phosphatidylglycerol (PG). Interacts with TOC33 and TOC75. Requires Mg(2+) as cofactor. In terms of tissue distribution, expressed in seedlings, leaves, flowers, and roots.

The protein localises to the plastid. It is found in the chloroplast outer membrane. The protein resides in the cytoplasm. GTPase involved in protein precursor import into chloroplasts. Seems to recognize chloroplast-destined precursor proteins and regulate their presentation to the translocation channel through GTP hydrolysis. Probably specialized in the import of nuclear encoded photosynthetic preproteins from the cytoplasm to the chloroplast. The chain is Translocase of chloroplast 90, chloroplastic (TOC90) from Arabidopsis thaliana (Mouse-ear cress).